Here is a 293-residue protein sequence, read N- to C-terminus: Bis(5'-nucleosyl)-tetraphosphatase, symmetrical (293 aa).

This sequence belongs to the Ap4A hydrolase family.

It catalyses the reaction P(1),P(4)-bis(5'-adenosyl) tetraphosphate + H2O = 2 ADP + 2 H(+). In terms of biological role, hydrolyzes diadenosine 5',5'''-P1,P4-tetraphosphate to yield ADP. In Pseudomonas fluorescens (strain Pf0-1), this protein is Bis(5'-nucleosyl)-tetraphosphatase, symmetrical.